A 178-amino-acid polypeptide reads, in one-letter code: Probable inosine/xanthosine triphosphatase (178 aa).

Belongs to the YjjX NTPase family. As to quaternary structure, homodimer. It depends on Mg(2+) as a cofactor. Mn(2+) serves as cofactor.

The catalysed reaction is XTP + H2O = XDP + phosphate + H(+). It carries out the reaction ITP + H2O = IDP + phosphate + H(+). Functionally, phosphatase that hydrolyzes non-canonical purine nucleotides such as XTP and ITP to their respective diphosphate derivatives. Probably excludes non-canonical purines from DNA/RNA precursor pool, thus preventing their incorporation into DNA/RNA and avoiding chromosomal lesions. The polypeptide is Probable inosine/xanthosine triphosphatase (Pyrobaculum calidifontis (strain DSM 21063 / JCM 11548 / VA1)).